A 466-amino-acid chain; its full sequence is Prophage integrase IntF (466 aa).

In terms of domain architecture, Core-binding (CB) spans 134–239; that stretch reads KTKVTFSVAW…LLRAFIKWSN (106 aa). The Tyr recombinase domain occupies 268–445; that stretch reads KADDCLQKEQ…PLDLLRKWHE (178 aa). Active-site residues include arginine 306, lysine 328, histidine 396, arginine 399, and histidine 422. Tyrosine 432 acts as the O-(3'-phospho-DNA)-tyrosine intermediate in catalysis.

The protein belongs to the 'phage' integrase family.

Integrase is necessary for integration of the phage into the host genome by site-specific recombination. In conjunction with excisionase, integrase is also necessary for excision of the prophage from the host genome. The protein is Prophage integrase IntF (intF) of Escherichia coli (strain K12).